We begin with the raw amino-acid sequence, 95 residues long: Small ribosomal subunit protein bS20 (95 aa).

Belongs to the bacterial ribosomal protein bS20 family.

Functionally, binds directly to 16S ribosomal RNA. The protein is Small ribosomal subunit protein bS20 of Ehrlichia canis (strain Jake).